The sequence spans 94 residues: Integration host factor subunit beta (94 aa).

It belongs to the bacterial histone-like protein family. As to quaternary structure, heterodimer of an alpha and a beta chain.

Functionally, this protein is one of the two subunits of integration host factor, a specific DNA-binding protein that functions in genetic recombination as well as in transcriptional and translational control. The sequence is that of Integration host factor subunit beta from Escherichia fergusonii (strain ATCC 35469 / DSM 13698 / CCUG 18766 / IAM 14443 / JCM 21226 / LMG 7866 / NBRC 102419 / NCTC 12128 / CDC 0568-73).